The chain runs to 428 residues: C4-dicarboxylate transport protein (428 aa).

The next 9 helical transmembrane spans lie at 4–24 (SLFK…ILLG), 44–64 (LIKM…IAGM), 76–96 (VALL…LIIV), 142–162 (IGAF…LFGF), 184–204 (VIFG…FGAM), 222–242 (LIIC…GTIA), 289–309 (VVGL…SIYL), 326–346 (IFHQ…AAGV), and 352–372 (IVLA…LALI).

This sequence belongs to the dicarboxylate/amino acid:cation symporter (DAACS) (TC 2.A.23) family.

It is found in the cell inner membrane. Responsible for the transport of dicarboxylates such as succinate, fumarate, and malate from the periplasm across the membrane. This is C4-dicarboxylate transport protein from Salmonella arizonae (strain ATCC BAA-731 / CDC346-86 / RSK2980).